Here is a 496-residue protein sequence, read N- to C-terminus: Lysosomal Pro-X carboxypeptidase (496 aa).

The signal sequence occupies residues 1–21 (MGRRALLLLLLSFLAPWTTIA). Positions 22–45 (LRPALRALGSLHLPTNPTSLPAVA) are excised as a propeptide. N47 and N101 each carry an N-linked (GlcNAc...) asparagine glycan. Residue S179 is the Charge relay system of the active site. The tract at residues 194 to 334 (HMVVGALAAS…QNIFQALNVY (141 aa)) is SKS domain. 4 disulfide bridges follow: C215/C372, C233/C310, C264/C343, and C364/C394. 3 N-linked (GlcNAc...) asparagine glycosylation sites follow: N317, N336, and N345. An N-linked (GlcNAc...) asparagine glycan is attached at N415. Catalysis depends on charge relay system residues D430 and H455.

The protein belongs to the peptidase S28 family. In terms of assembly, homodimer.

It is found in the lysosome. The catalysed reaction is Cleavage of a -Pro-|-Xaa bond to release a C-terminal amino acid.. Functionally, cleaves C-terminal amino acids linked to proline in peptides such as angiotensin II, III and des-Arg9-bradykinin. This cleavage occurs at acidic pH, but enzymatic activity is retained with some substrates at neutral pH. In Pongo abelii (Sumatran orangutan), this protein is Lysosomal Pro-X carboxypeptidase (PRCP).